A 506-amino-acid polypeptide reads, in one-letter code: Maturase K (506 aa).

This sequence belongs to the intron maturase 2 family. MatK subfamily.

The protein resides in the plastid. Its subcellular location is the chloroplast. Its function is as follows. Usually encoded in the trnK tRNA gene intron. Probably assists in splicing its own and other chloroplast group II introns. The protein is Maturase K of Olea europaea (Common olive).